The chain runs to 176 residues: Large ribosomal subunit protein uL6 (176 aa).

It belongs to the universal ribosomal protein uL6 family. In terms of assembly, part of the 50S ribosomal subunit.

Functionally, this protein binds to the 23S rRNA, and is important in its secondary structure. It is located near the subunit interface in the base of the L7/L12 stalk, and near the tRNA binding site of the peptidyltransferase center. The protein is Large ribosomal subunit protein uL6 of Burkholderia cenocepacia (strain HI2424).